The sequence spans 71 residues: UPF0346 protein SPT_1257 (71 aa).

Belongs to the UPF0346 family.

This is UPF0346 protein SPT_1257 from Streptococcus pneumoniae (strain Taiwan19F-14).